The sequence spans 424 residues: Insertion element IS2A uncharacterized 48.2 kDa protein (424 aa).

The Integrase catalytic domain occupies 229–412 (KPAVPPSKRA…SPREYLRHGA (184 aa)).

It belongs to the transposase 8 family.

The polypeptide is Insertion element IS2A uncharacterized 48.2 kDa protein (Escherichia coli).